The sequence spans 87 residues: Small ribosomal subunit protein bS20 (87 aa).

It belongs to the bacterial ribosomal protein bS20 family.

Binds directly to 16S ribosomal RNA. The polypeptide is Small ribosomal subunit protein bS20 (Clostridium perfringens (strain 13 / Type A)).